Reading from the N-terminus, the 126-residue chain is Fluoride-specific ion channel FluC (126 aa).

4 consecutive transmembrane segments (helical) span residues 7–24 (LWVS…YFLS), 35–55 (FPWG…LFLV), 69–89 (LLIA…AYES), and 98–118 (WGLF…AVLG). Residues glycine 77 and threonine 80 each coordinate Na(+).

This sequence belongs to the fluoride channel Fluc/FEX (TC 1.A.43) family.

The protein localises to the cell inner membrane. The catalysed reaction is fluoride(in) = fluoride(out). Na(+) is not transported, but it plays an essential structural role and its presence is essential for fluoride channel function. Fluoride-specific ion channel. Important for reducing fluoride concentration in the cell, thus reducing its toxicity. The polypeptide is Fluoride-specific ion channel FluC (Koribacter versatilis (strain Ellin345)).